The sequence spans 185 residues: Photosystem I assembly protein Ycf4 (185 aa).

A run of 2 helical transmembrane segments spans residues 21–43 (NFCW…TSSY) and 63–85 (GLVM…CTIL).

Belongs to the Ycf4 family.

The protein localises to the plastid. It is found in the chloroplast thylakoid membrane. Its function is as follows. Seems to be required for the assembly of the photosystem I complex. This chain is Photosystem I assembly protein Ycf4, found in Brassica oleracea (Wild cabbage).